The following is a 525-amino-acid chain: Eukaryotic translation initiation factor 3 subunit L (525 aa).

A compositionally biased stretch (acidic residues) spans 1 to 19; it reads MYTQADEYDGGDAGYEDDY. The segment at 1–21 is disordered; that stretch reads MYTQADEYDGGDAGYEDDYSG. Positions 296 to 502 constitute a PCI domain; the sequence is DAIRCFSSVL…IHIADTKVDR (207 aa).

This sequence belongs to the eIF-3 subunit L family. In terms of assembly, component of the eukaryotic translation initiation factor 3 (eIF-3) complex.

Its subcellular location is the cytoplasm. Functionally, component of the eukaryotic translation initiation factor 3 (eIF-3) complex, which is involved in protein synthesis of a specialized repertoire of mRNAs and, together with other initiation factors, stimulates binding of mRNA and methionyl-tRNAi to the 40S ribosome. The eIF-3 complex specifically targets and initiates translation of a subset of mRNAs involved in cell proliferation. This chain is Eukaryotic translation initiation factor 3 subunit L, found in Nematostella vectensis (Starlet sea anemone).